The following is a 117-amino-acid chain: Large ribosomal subunit protein bL20c (117 aa).

It belongs to the bacterial ribosomal protein bL20 family.

Its subcellular location is the plastid. The protein localises to the chloroplast. Binds directly to 23S ribosomal RNA and is necessary for the in vitro assembly process of the 50S ribosomal subunit. It is not involved in the protein synthesizing functions of that subunit. The sequence is that of Large ribosomal subunit protein bL20c from Calycanthus floridus var. glaucus (Eastern sweetshrub).